A 119-amino-acid chain; its full sequence is U-scoloptoxin(01)-Cw1a (119 aa).

The first 22 residues, 1 to 22 (MSKATNFYLFVLLGVFVALVRT), serve as a signal peptide directing secretion. The Chitin-binding type-2 domain maps to 38 to 96 (SFSCDGKKPGYYADQQMECQVYHVCTPDNEHAVLLCGPGTIFNQKHLVCDFPSNYACAD). A disulfide bond links cysteine 73 and cysteine 86.

The protein belongs to the scoloptoxin-01 family. In terms of processing, contains 3 disulfide bonds. In terms of tissue distribution, expressed by the venom gland.

The protein resides in the secreted. The sequence is that of U-scoloptoxin(01)-Cw1a from Cormocephalus westwoodi (Westwood's green centipede).